The sequence spans 70 residues: Large ribosomal subunit protein bL28 (70 aa).

It belongs to the bacterial ribosomal protein bL28 family.

The sequence is that of Large ribosomal subunit protein bL28 from Thermosipho melanesiensis (strain DSM 12029 / CIP 104789 / BI429).